The chain runs to 206 residues: A-type ATP synthase subunit E (206 aa).

This sequence belongs to the V-ATPase E subunit family. As to quaternary structure, has multiple subunits with at least A(3), B(3), C, D, E, F, H, I and proteolipid K(x).

The protein resides in the cell membrane. Functionally, component of the A-type ATP synthase that produces ATP from ADP in the presence of a proton gradient across the membrane. The protein is A-type ATP synthase subunit E of Methanothermobacter thermautotrophicus (strain ATCC 29096 / DSM 1053 / JCM 10044 / NBRC 100330 / Delta H) (Methanobacterium thermoautotrophicum).